Reading from the N-terminus, the 696-residue chain is Glycine--tRNA ligase beta subunit (696 aa).

This sequence belongs to the class-II aminoacyl-tRNA synthetase family. Tetramer of two alpha and two beta subunits.

It is found in the cytoplasm. It catalyses the reaction tRNA(Gly) + glycine + ATP = glycyl-tRNA(Gly) + AMP + diphosphate. The protein is Glycine--tRNA ligase beta subunit of Aromatoleum aromaticum (strain DSM 19018 / LMG 30748 / EbN1) (Azoarcus sp. (strain EbN1)).